Here is a 159-residue protein sequence, read N- to C-terminus: Ribonuclease H (159 aa).

In terms of domain architecture, RNase H type-1 spans 1-142 (MHKQVEIFTD…CDELAKAAAQ (142 aa)). Residues Asp-10, Glu-48, Asp-70, and Asp-134 each contribute to the Mg(2+) site. Positions 135–159 (ELAKAAAQSPTKEDTGYLESQQDKT) are disordered. Residues 145 to 159 (TKEDTGYLESQQDKT) are compositionally biased toward basic and acidic residues.

This sequence belongs to the RNase H family. In terms of assembly, monomer. The cofactor is Mg(2+).

Its subcellular location is the cytoplasm. The catalysed reaction is Endonucleolytic cleavage to 5'-phosphomonoester.. Its function is as follows. Endonuclease that specifically degrades the RNA of RNA-DNA hybrids. The sequence is that of Ribonuclease H from Proteus mirabilis (strain HI4320).